A 669-amino-acid chain; its full sequence is MSKEIAKKRIEELRDLLNTFNYQYHVLDNPSVSDAEYDRNMQELIKLEAENPEFMSEDSPSIRVGGTVLDIFEKVTHKSPMLSLGNAFNEGDLRDFDRRVRQGIDDANVRYICELKIDGLAVSLHYEKGRFIQGATRGDGVTGEDITQNLKTIKAIPLRLNEEVTLEARGEAYMPKRSFVKLNEEKEQNGEDVFANPRNAAAGSIRQLDPKIAAKRNLSMFVYGLANVEEKTIPSHSESLDYLGELGFKTNPNRRTCETIEEVIAYVEEWQEKRPHLDYEIDGIVIKVDDVALQESLGTTAKSPRWAIAYKFPAEEVVTRLTGIELSVGRTGVVTPTAELEPVRVAGTIVRRASLHNEDLIREKDIRIGDYVVVKKAGDIIPEVVNVIFDKRTGGEEEYHMPTHCPACESELVRLEEEVALRCINPTCPAQIREGLIHFVSRNAMNIDGLGERVITQLFDADYIRTFADLYSLTKEQLLQLERFGEKSATNLVQAIENSKENSLERLLFGLGIRHVGAKAARTFAEHFETMDALVKATEEELKAINEIGEKMAQSVVAYFDNEDVLELLQQFKEYGVNMTYKGIKIADLQNVESYFAGKTVVLTGKLEVMGRSEAKKKIEALGGKVTGSVSKSTDLVVAGEAAGSKLAQAEKHNVEVWNEERFLQELNK.

NAD(+) contacts are provided by residues 34–38, 83–84, and Glu114; these read DAEYD and SL. The active-site N6-AMP-lysine intermediate is the Lys116. NAD(+) contacts are provided by Arg137, Glu171, Lys287, and Lys311. Zn(2+) contacts are provided by Cys405, Cys408, Cys423, and Cys428. In terms of domain architecture, BRCT spans 591-669; sequence NVESYFAGKT…EERFLQELNK (79 aa).

It belongs to the NAD-dependent DNA ligase family. LigA subfamily. It depends on Mg(2+) as a cofactor. Requires Mn(2+) as cofactor.

The catalysed reaction is NAD(+) + (deoxyribonucleotide)n-3'-hydroxyl + 5'-phospho-(deoxyribonucleotide)m = (deoxyribonucleotide)n+m + AMP + beta-nicotinamide D-nucleotide.. In terms of biological role, DNA ligase that catalyzes the formation of phosphodiester linkages between 5'-phosphoryl and 3'-hydroxyl groups in double-stranded DNA using NAD as a coenzyme and as the energy source for the reaction. It is essential for DNA replication and repair of damaged DNA. This Bacillus anthracis (strain A0248) protein is DNA ligase.